Here is a 276-residue protein sequence, read N- to C-terminus: Alpha N-terminal protein methyltransferase 1 (276 aa).

Residues glycine 96, arginine 101, 118–120, 149–150, and glutamine 165 contribute to the S-adenosyl-L-methionine site; these read EPV and LQ.

The protein belongs to the methyltransferase superfamily. NTM1 family.

The enzyme catalyses N-terminal L-alanyl-L-prolyl-L-lysyl-[protein] + 3 S-adenosyl-L-methionine = N-terminal N,N,N-trimethyl-L-alanyl-L-prolyl-L-lysyl-[protein] + 3 S-adenosyl-L-homocysteine + 3 H(+). It carries out the reaction N-terminal L-seryl-L-prolyl-L-lysyl-[protein] + 3 S-adenosyl-L-methionine = N-terminal N,N,N-trimethyl-L-seryl-L-prolyl-L-lysyl-[protein] + 3 S-adenosyl-L-homocysteine + 3 H(+). It catalyses the reaction N-terminal L-prolyl-L-prolyl-L-lysyl-[protein] + 2 S-adenosyl-L-methionine = N-terminal N,N-dimethyl-L-prolyl-L-prolyl-L-lysyl-[protein] + 2 S-adenosyl-L-homocysteine + 2 H(+). Alpha-N-methyltransferase that methylates the N-terminus of target proteins containing the N-terminal motif [Ala/Pro/Ser]-Pro-Lys when the initiator Met is cleaved. Specifically catalyzes mono-, di- or tri-methylation of exposed alpha-amino group of Ala or Ser residue in the [Ala/Ser]-Pro-Lys motif and mono- or di-methylation of Pro in the Pro-Pro-Lys motif. The sequence is that of Alpha N-terminal protein methyltransferase 1 from Arabidopsis thaliana (Mouse-ear cress).